Reading from the N-terminus, the 363-residue chain is 3-isopropylmalate dehydrogenase (363 aa).

NAD(+) is bound at residue 79–92 (GPKWEHLPPNDQPE). The substrate site is built by Arg100, Arg110, Arg139, and Asp228. Positions 228, 252, and 256 each coordinate Mg(2+). 286 to 298 (GSAPDIAGKNIAN) lines the NAD(+) pocket.

It belongs to the isocitrate and isopropylmalate dehydrogenases family. LeuB type 1 subfamily. As to quaternary structure, homodimer. Requires Mg(2+) as cofactor. The cofactor is Mn(2+).

Its subcellular location is the cytoplasm. The enzyme catalyses (2R,3S)-3-isopropylmalate + NAD(+) = 4-methyl-2-oxopentanoate + CO2 + NADH. Its pathway is amino-acid biosynthesis; L-leucine biosynthesis; L-leucine from 3-methyl-2-oxobutanoate: step 3/4. Functionally, catalyzes the oxidation of 3-carboxy-2-hydroxy-4-methylpentanoate (3-isopropylmalate) to 3-carboxy-4-methyl-2-oxopentanoate. The product decarboxylates to 4-methyl-2 oxopentanoate. The sequence is that of 3-isopropylmalate dehydrogenase from Vibrio vulnificus (strain CMCP6).